Reading from the N-terminus, the 569-residue chain is uncharacterized protein (569 aa).

A signal peptide spans 1-24 (MKFQRKYWGLLSTLGVSSAVALSA). C25 carries the N-palmitoyl cysteine lipid modification. C25 carries the S-diacylglycerol cysteine lipid modification. Disordered regions lie at residues 111 to 137 (SNMK…EWEV) and 242 to 267 (GKNG…KKIE). 2 stretches are compositionally biased toward low complexity: residues 119–130 (SSSSSSTGNNGS) and 249–260 (KKMTTDSSSTQQ).

To M.pneumoniae MPN_456 and M.genitalium MG321 N-terminal region.

Its subcellular location is the cell membrane. This is an uncharacterized protein from Mycoplasma pneumoniae (strain ATCC 29342 / M129 / Subtype 1) (Mycoplasmoides pneumoniae).